Consider the following 254-residue polypeptide: MLDNCKRLLFRKFPCFLSMAPSPLFLTQTPRLLDEFLKGGVVMFPLLLLSILALTTAFERGWFWSRLLIQEDQVVRDVLDAAVEDLVKAREIAEHARHLAIGRFLLAPLKLRHPSPETFRLAMEATADKEFARMRRGDKLLETIIALAPLLGLLGTVTGLIRTFNNLNIGGGGSSAEATQAASGIGEALITTAAGMMVAIFALLVFRVLVSLQSQQMDYFAAVGSELELIYREVWYEPHQPMPNLLMAARIAEP.

Helical transmembrane passes span 39–59 (GGVVMFPLLLLSILALTTAFE), 141–161 (LETIIALAPLLGLLGTVTGLI), and 185–205 (IGEALITTAAGMMVAIFALLV).

It belongs to the ExbB/TolQ family.

It is found in the cell inner membrane. In terms of biological role, involved in the TonB-dependent energy-dependent transport of various receptor-bound substrates. Protects ExbD from proteolytic degradation and functionally stabilizes TonB. This Synechocystis sp. (strain ATCC 27184 / PCC 6803 / Kazusa) protein is Putative biopolymer transport protein ExbB-like 1.